A 465-amino-acid chain; its full sequence is Fumarate hydratase class II (465 aa).

Substrate is bound by residues 99 to 101, arginine 127, 130 to 133, 140 to 142, and threonine 188; these read SGT, HPND, and STN. Histidine 189 (proton donor/acceptor) is an active-site residue. The active site involves serine 319. Substrate-binding positions include serine 320 and 325-327; that span reads KVN.

Belongs to the class-II fumarase/aspartase family. Fumarase subfamily. Homotetramer.

Its subcellular location is the cytoplasm. The catalysed reaction is (S)-malate = fumarate + H2O. The protein operates within carbohydrate metabolism; tricarboxylic acid cycle; (S)-malate from fumarate: step 1/1. Its function is as follows. Involved in the TCA cycle. Catalyzes the stereospecific interconversion of fumarate to L-malate. The chain is Fumarate hydratase class II from Parasynechococcus marenigrum (strain WH8102).